The following is a 64-amino-acid chain: Alpha-conotoxin-like Lp1.7 (64 aa).

The signal sequence occupies residues 1–21; the sequence is MGMRMMFTMFLLVVLTTTVVS. Residues 22–41 constitute a propeptide that is removed on maturation; the sequence is FNSDRESNHENRRTSNQITR. Intrachain disulfides connect Cys-47–Cys-53 and Cys-48–Cys-61. The interval 49–51 is lacks the Ser-Xaa-Pro motif that is crucial for potent interaction with nAChR; the sequence is DDP.

Belongs to the conotoxin A superfamily. In terms of tissue distribution, expressed by the venom duct.

The protein localises to the secreted. In terms of biological role, alpha-conotoxins act on postsynaptic membranes, they bind to the nicotinic acetylcholine receptors (nAChR) and thus inhibit them. Has possibly a distinct nAChR binding mode from other alpha-conotoxins, due to a different three residue motif (lacks the Ser-Xaa-Pro motif). This chain is Alpha-conotoxin-like Lp1.7, found in Conus leopardus (Leopard cone).